A 471-amino-acid chain; its full sequence is Plant intracellular Ras-group-related LRR protein 2 (471 aa).

A coiled-coil region spans residues 106 to 133 (VVRLDEVHDSYEKKLKDTEEELSRVYST). LRR repeat units follow at residues 159-182 (GGTV…FWKV), 183-205 (VGLV…ISKL), 206-229 (KKLE…GMLL), 231-251 (LRIL…IAHC), 253-275 (SLVE…GYGL), 276-298 (QNLE…ISEM), 300-321 (NLKY…IGRL), 324-346 (LEVL…ITDL), 347-369 (TNLR…FYRL), and 371-392 (KLEK…VATQ). The GVYW; degenerate motif lies at 393–405 (GAEVVREFMRKRW).

Belongs to the SHOC2 family. In terms of tissue distribution, widely expressed but preferentially in roots.

Functionally, leucine-rich repeat protein that likely mediates protein interactions, possibly in the context of signal transduction. In Arabidopsis thaliana (Mouse-ear cress), this protein is Plant intracellular Ras-group-related LRR protein 2 (PIRL2).